A 410-amino-acid chain; its full sequence is Magnesium transporter NIPA3 (410 aa).

Residues 1-67 (MGAQVRLPPG…ISANVENKYS (67 aa)) lie on the Extracellular side of the membrane. N-linked (GlcNAc...) asparagine glycans are attached at residues Asn25, Asn35, and Asn50. A helical transmembrane segment spans residues 68–88 (LYVGLVLAVSSSIFIGSSFIL). The Cytoplasmic segment spans residues 89 to 114 (KKKGLLQLASKGITRAGQGGHSYLKE). The chain crosses the membrane as a helical span at residues 115 to 135 (WLWWVGLLSMGVGEAANFAAY). Ala136 is a topological domain (extracellular). Residues 137–157 (FAPATLVTPLGALSVLISAIL) traverse the membrane as a helical segment. The Cytoplasmic portion of the chain corresponds to 158-165 (SSYFLNEH). The helical transmembrane segment at 166 to 186 (LNIHGKIGCILSILGSTVMVI) threads the bilayer. The Extracellular segment spans residues 187–207 (HAPQEEEVTSLHEMEMKLRDP). The chain crosses the membrane as a helical span at residues 208 to 228 (GFISFAVIVTVISLVLILIVA). Topologically, residues 229–233 (PKKGQ) are cytoplasmic. The chain crosses the membrane as a helical span at residues 234–254 (TNILVYISICSLIGAFSVSSV). Residues 255-273 (KGLGIAIKELIEWKPVYKH) lie on the Extracellular side of the membrane. The helical transmembrane segment at 274 to 294 (PLVFVLLAVLVLSVTTQINYL) threads the bilayer. Topologically, residues 295 to 304 (NKALDTFNTS) are cytoplasmic. A helical membrane pass occupies residues 305–325 (IVTPIYYVFFTSMVVTCSAIL). At 326–336 (FQEWYGMTAGD) the chain is on the extracellular side. The chain crosses the membrane as a helical span at residues 337–357 (IIGTLSGFFTIIIGIFLLHAF). Over 358–410 (KNTDITWSELTSTAKKEAVSLNVSENNYVLLENLECSAPGYNDDVTLFSRTDD) the chain is Cytoplasmic.

It belongs to the NIPA family.

The protein localises to the golgi apparatus membrane. The enzyme catalyses Mg(2+)(in) = Mg(2+)(out). In terms of biological role, acts as a Mg(2+) transporter. Can also transport other divalent cations such as Fe(2+), Sr(2+), Ba(2+), Mn(2+), Cu(2+) and Co(2+) but to a much less extent than Mg(2+). This Pongo abelii (Sumatran orangutan) protein is Magnesium transporter NIPA3 (NIPAL1).